A 265-amino-acid chain; its full sequence is 4-hydroxy-tetrahydrodipicolinate reductase (265 aa).

9 to 14 (GPRGRM) serves as a coordination point for NAD(+). Residue Arg-37 participates in NADP(+) binding. NAD(+) is bound by residues 98–100 (GTT) and 124–127 (APNF). The Proton donor/acceptor role is filled by His-154. His-155 provides a ligand contact to (S)-2,3,4,5-tetrahydrodipicolinate. The active-site Proton donor is the Lys-158. 164–165 (GT) contacts (S)-2,3,4,5-tetrahydrodipicolinate.

This sequence belongs to the DapB family.

The protein resides in the cytoplasm. The enzyme catalyses (S)-2,3,4,5-tetrahydrodipicolinate + NAD(+) + H2O = (2S,4S)-4-hydroxy-2,3,4,5-tetrahydrodipicolinate + NADH + H(+). It carries out the reaction (S)-2,3,4,5-tetrahydrodipicolinate + NADP(+) + H2O = (2S,4S)-4-hydroxy-2,3,4,5-tetrahydrodipicolinate + NADPH + H(+). The protein operates within amino-acid biosynthesis; L-lysine biosynthesis via DAP pathway; (S)-tetrahydrodipicolinate from L-aspartate: step 4/4. Catalyzes the conversion of 4-hydroxy-tetrahydrodipicolinate (HTPA) to tetrahydrodipicolinate. This chain is 4-hydroxy-tetrahydrodipicolinate reductase, found in Geobacillus thermodenitrificans (strain NG80-2).